We begin with the raw amino-acid sequence, 364 residues long: V-type proton ATPase subunit d (364 aa).

Belongs to the V-ATPase V0D/AC39 subunit family. In terms of assembly, V-ATPase is a heteromultimeric enzyme composed of a peripheral catalytic V1 complex (components A to H) attached to an integral membrane V0 proton pore complex (components: a, c, c', c'', d, e, f and VOA1).

It localises to the vacuole membrane. Its function is as follows. Subunit of the V0 complex of vacuolar(H+)-ATPase (V-ATPase), a multisubunit enzyme composed of a peripheral complex (V1) that hydrolyzes ATP and a membrane integral complex (V0) that translocates protons. V-ATPase is responsible for acidifying and maintaining the pH of intracellular compartments. This subunit is a non-integral membrane component of the membrane pore domain and is required for proper assembly of the V0 sector. Might be involved in the regulated assembly of V1 subunits onto the membrane sector or alternatively may prevent the passage of protons through V0 pores. This Neurospora crassa (strain ATCC 24698 / 74-OR23-1A / CBS 708.71 / DSM 1257 / FGSC 987) protein is V-type proton ATPase subunit d.